Reading from the N-terminus, the 358-residue chain is Protein-arginine kinase (358 aa).

The region spanning 24 to 255 is the Phosphagen kinase C-terminal domain; it reads IVLSSRIRLA…KQLIRQERVA (232 aa). ATP-binding positions include 27–31, His92, Arg126, 177–181, and 208–213; these read SSRIR, RASVM, and RGIYGE. The short motif at 338 to 343 is the RDXXRA motif of the pArg binding pocket involved in allosteric regulation element; it reads RDERRA.

This sequence belongs to the ATP:guanido phosphotransferase family.

It catalyses the reaction L-arginyl-[protein] + ATP = N(omega)-phospho-L-arginyl-[protein] + ADP + H(+). Its activity is regulated as follows. Appears to be allosterically activated by the binding of pArg-containing polypeptides to the pArg-binding pocket localized in the C-terminal domain of McsB. Functionally, catalyzes the specific phosphorylation of arginine residues in a large number of proteins. Is part of the bacterial stress response system. Protein arginine phosphorylation has a physiologically important role and is involved in the regulation of many critical cellular processes, such as protein homeostasis, motility, competence, and stringent and stress responses, by regulating gene expression and protein activity. This Shouchella clausii (strain KSM-K16) (Alkalihalobacillus clausii) protein is Protein-arginine kinase.